Here is a 40-residue protein sequence, read N- to C-terminus: Neutral phospholipase A2 homolog cannitoxin beta chain 2 (40 aa).

In terms of assembly, heterotrimer of alpha, beta, and gamma chains; non-covalently linked. Expressed by the venom gland.

It localises to the secreted. Functionally, heterotrimer: Snake venom phospholipase A2 (PLA2) heterotrimer that acts as a potent presynaptic neurotoxin by blocking synaptic transmission and synaptic vesicle recycling. Enzymatic activity is essential for the neurotoxic effects. May act by binding in a calcium-dependent fashion to neurotonal pentraxin-1 (NPTX1) and neurotonal pentraxin-2 (NPTX2), but not to neuronal pentraxin receptor (NPTXR). Also binds to taipoxin-associated calcium binding protein 49 (RCN2), a protein localized in the lumen of endoplasmic reticulum. Monomer (beta chain): Snake venom phospholipase A2 homolog that is neither toxic nor enzymatically active. Does not bind calcium. This chain is Neutral phospholipase A2 homolog cannitoxin beta chain 2, found in Oxyuranus scutellatus canni (Papuan taipan).